Reading from the N-terminus, the 354-residue chain is UDP-3-O-acylglucosamine N-acyltransferase (354 aa).

The active-site Proton acceptor is His250.

The protein belongs to the transferase hexapeptide repeat family. LpxD subfamily. As to quaternary structure, homotrimer.

It carries out the reaction a UDP-3-O-[(3R)-3-hydroxyacyl]-alpha-D-glucosamine + a (3R)-hydroxyacyl-[ACP] = a UDP-2-N,3-O-bis[(3R)-3-hydroxyacyl]-alpha-D-glucosamine + holo-[ACP] + H(+). It participates in bacterial outer membrane biogenesis; LPS lipid A biosynthesis. Functionally, catalyzes the N-acylation of UDP-3-O-acylglucosamine using 3-hydroxyacyl-ACP as the acyl donor. Is involved in the biosynthesis of lipid A, a phosphorylated glycolipid that anchors the lipopolysaccharide to the outer membrane of the cell. The protein is UDP-3-O-acylglucosamine N-acyltransferase of Methylococcus capsulatus (strain ATCC 33009 / NCIMB 11132 / Bath).